A 295-amino-acid chain; its full sequence is G1/S-specific cyclin-D1 (295 aa).

The Cyclin N-terminal domain occupies 28–152 (LRAMLKTEET…LLVNKLKWNL (125 aa)). Positions 262–283 (AQQNVDPKATEEEGEVEEEAGL) are disordered. Residue Lys269 forms a Glycyl lysine isopeptide (Lys-Gly) (interchain with G-Cter in ubiquitin) linkage. Position 286 is a phosphothreonine (Thr286).

This sequence belongs to the cyclin family. Cyclin D subfamily. As to quaternary structure, interacts with either CDK4 or CDK6 protein kinase to form a serine/threonine kinase holoenzyme complex. The cyclin subunit imparts substrate specificity to the complex. Component of the ternary complex CCND1/CDK4/CDKN1B required for nuclear translocation and modulation of CDK4-mediated kinase activity. Interacts directly with CDKN1B. Can form similar complexes with either CDKN1A or CDKN2A. Interacts with UHRF2; the interaction ubiquitinates CCND1 and appears to occur independently of phosphorylation. Interacts with USP2. Interacts (via cyclin N-terminal domain) with INSM1 (via N-terminal region); the interaction competes with the binding of CCND1 to CDK4 during cell cycle progression and inhibits CDK4 activity. Interacts with CDK4; the interaction is prevented with the binding of CCND1 to INSM1 during cell cycle progression. Post-translationally, phosphorylation at Thr-286 by MAP kinases is required for ubiquitination and degradation by the DCX(AMBRA1) complex. It also plays an essential role for recognition by the FBXO31 component of SCF (SKP1-cullin-F-box) protein ligase complex following DNA damage. In terms of processing, ubiquitinated at Lys-269 by the DCX(AMBRA1) complex during the transition from G1 to S cell phase, leading to its degradation: ubiquitination is dependent on Thr-286 phosphorylation. The DCX(AMBRA1) complex represents the major regulator of CCND1 stability during the G1/S transition. Also ubiquitinated by the SCF(FBXO4) and Cul7-RING(FBXW8) ubiquitin-protein ligase complexes. Following DNA damage it is ubiquitinated by the SCF(FBXO31) protein ligase complex. SCF(FBXO31) ubiquitination is dependent on Thr-286 phosphorylation. Ubiquitinated also by UHRF2 apparently in a phosphorylation-independent manner. Ubiquitination leads to its degradation and G1 arrest. Deubiquitinated by USP2; leading to its stabilization. As to expression, expressed in the intestinal epithelium.

The protein resides in the nucleus. Its subcellular location is the cytoplasm. The protein localises to the nucleus membrane. Its function is as follows. Regulatory component of the cyclin D1-CDK4 (DC) complex that phosphorylates and inhibits members of the retinoblastoma (RB) protein family including RB1 and regulates the cell-cycle during G(1)/S transition. Phosphorylation of RB1 allows dissociation of the transcription factor E2F from the RB/E2F complex and the subsequent transcription of E2F target genes which are responsible for the progression through the G(1) phase. Hypophosphorylates RB1 in early G(1) phase. Cyclin D-CDK4 complexes are major integrators of various mitogenenic and antimitogenic signals. Also a substrate for SMAD3, phosphorylating SMAD3 in a cell-cycle-dependent manner and repressing its transcriptional activity. Component of the ternary complex, cyclin D1/CDK4/CDKN1B, required for nuclear translocation and activity of the cyclin D-CDK4 complex. Exhibits transcriptional corepressor activity with INSM1 on the NEUROD1 and INS promoters in a cell cycle-independent manner. The protein is G1/S-specific cyclin-D1 (Ccnd1) of Mus musculus (Mouse).